The following is a 302-amino-acid chain: ATP synthase gamma chain (302 aa).

This sequence belongs to the ATPase gamma chain family. In terms of assembly, F-type ATPases have 2 components, CF(1) - the catalytic core - and CF(0) - the membrane proton channel. CF(1) has five subunits: alpha(3), beta(3), gamma(1), delta(1), epsilon(1). CF(0) has three main subunits: a, b and c.

The protein resides in the cell membrane. Functionally, produces ATP from ADP in the presence of a proton gradient across the membrane. The gamma chain is believed to be important in regulating ATPase activity and the flow of protons through the CF(0) complex. The polypeptide is ATP synthase gamma chain (Enterococcus faecalis (strain ATCC 700802 / V583)).